Consider the following 103-residue polypeptide: Urease subunit gamma (103 aa).

Belongs to the urease gamma subunit family. In terms of assembly, heterotrimer of UreA (gamma), UreB (beta) and UreC (alpha) subunits. Three heterotrimers associate to form the active enzyme.

The protein resides in the cytoplasm. The enzyme catalyses urea + 2 H2O + H(+) = hydrogencarbonate + 2 NH4(+). It functions in the pathway nitrogen metabolism; urea degradation; CO(2) and NH(3) from urea (urease route): step 1/1. The protein is Urease subunit gamma of Paracoccus denitrificans (strain Pd 1222).